A 602-amino-acid chain; its full sequence is Protein indeterminate-domain 5, chloroplastic (602 aa).

Low complexity-rich tracts occupy residues 1 to 10 (MAASSSSAAS) and 21 to 30 (HLLPPNSSAA). Residues 1–50 (MAASSSSAASFFGVRQDDQSHLLPPNSSAAAPPPPPPHHQAPLPPLEAPP) constitute a chloroplast transit peptide. The tract at residues 1-65 (MAASSSSAAS…NQPRTPNSDA (65 aa)) is disordered. Pro residues predominate over residues 31–48 (APPPPPPHHQAPLPPLEA). Threonine 60 bears the Phosphothreonine mark. A Phosphoserine modification is found at serine 71. 2 C2H2-type zinc fingers span residues 81–103 (FICE…RRGH) and 122–152 (YLCP…YRKH). The segment at 157–180 (WKCDKCSKRYAVQSDWKAHSKTCG) adopts a C2H2-type 2; degenerate zinc-finger fold. Positions 159, 162, 175, 179, 186, 188, 201, and 205 each coordinate Zn(2+). The segment at 184–207 (YRCDCGTLFSRRDSFITHRAFCDA) adopts a CCHC-type 2; atypical zinc-finger fold. Residues 194 to 206 (RRDSFITHRAFCD) are SHR-binding. Disordered stretches follow at residues 443–467 (KAAQ…NNAS) and 537–602 (KSMS…HASF). Low complexity-rich tracts occupy residues 448–467 (GSTS…NNAS), 546–560 (QQQQ…QQQQ), and 570–579 (SSSDSADRSS).

As to quaternary structure, binds to RGA and SCL3 competitively. As to expression, highly expressed in leaf tissues.

The protein localises to the plastid. Its subcellular location is the chloroplast. Its function is as follows. Transcription factor acting as a positive regulator of the starch synthase SS4. Controls chloroplast development and starch granule formation. Binds DNA via its zinc fingers. Recognizes and binds to SCL3 promoter sequence 5'-AGACAA-3' to promote its expression when in complex with RGA. The chain is Protein indeterminate-domain 5, chloroplastic from Arabidopsis thaliana (Mouse-ear cress).